A 159-amino-acid chain; its full sequence is MDKVIYPGTFDPITRGHEDLIQRASRLFDQVVVAVAANSGKSPCFSLEERVEMARAVLAEYANVEVTGFSGLLMEFTRQQQAHVIVRGLRAVSDFEYEFQLAGMNRSLYPDVETIFLTPSEQYMFISATIVREIARLGGDASKFVHPLVAERLYEKRKK.

Threonine 9 contacts substrate. Residues 9 to 10 and histidine 17 contribute to the ATP site; that span reads TF. Positions 41, 73, and 87 each coordinate substrate. ATP is bound by residues 88-90, glutamate 98, and 123-129; these read GLR and YMFISAT.

It belongs to the bacterial CoaD family. As to quaternary structure, homohexamer. The cofactor is Mg(2+).

The protein resides in the cytoplasm. It catalyses the reaction (R)-4'-phosphopantetheine + ATP + H(+) = 3'-dephospho-CoA + diphosphate. Its pathway is cofactor biosynthesis; coenzyme A biosynthesis; CoA from (R)-pantothenate: step 4/5. Functionally, reversibly transfers an adenylyl group from ATP to 4'-phosphopantetheine, yielding dephospho-CoA (dPCoA) and pyrophosphate. This is Phosphopantetheine adenylyltransferase from Nitrosomonas europaea (strain ATCC 19718 / CIP 103999 / KCTC 2705 / NBRC 14298).